The following is a 221-amino-acid chain: Leucine rich adaptor protein 1-like (221 aa).

Methionine 1 carries the N-acetylmethionine modification. The disordered stretch occupies residues methionine 1–serine 81. 2 stretches are compositionally biased toward basic and acidic residues: residues aspartate 8–proline 21 and leucine 28–alanine 39. Residues serine 48 to proline 75 are compositionally biased toward low complexity.

This is Leucine rich adaptor protein 1-like (Lurap1l) from Rattus norvegicus (Rat).